The chain runs to 455 residues: Ribulose bisphosphate carboxylase large chain (455 aa).

An N6,N6,N6-trimethyllysine modification is found at Lys5. Substrate is bound by residues Asn114 and Thr164. Lys166 serves as the catalytic Proton acceptor. Lys168 is a substrate binding site. Lys192, Asp194, and Glu195 together coordinate Mg(2+). The residue at position 192 (Lys192) is an N6-carboxylysine. The active-site Proton acceptor is the His285. Substrate contacts are provided by Arg286, His318, and Ser370.

Belongs to the RuBisCO large chain family. Type I subfamily. As to quaternary structure, heterohexadecamer of 8 large chains and 8 small chains; disulfide-linked. The disulfide link is formed within the large subunit homodimers. Mg(2+) serves as cofactor. Post-translationally, the disulfide bond which can form in the large chain dimeric partners within the hexadecamer appears to be associated with oxidative stress and protein turnover.

The protein localises to the plastid. It localises to the chloroplast. It carries out the reaction 2 (2R)-3-phosphoglycerate + 2 H(+) = D-ribulose 1,5-bisphosphate + CO2 + H2O. The catalysed reaction is D-ribulose 1,5-bisphosphate + O2 = 2-phosphoglycolate + (2R)-3-phosphoglycerate + 2 H(+). RuBisCO catalyzes two reactions: the carboxylation of D-ribulose 1,5-bisphosphate, the primary event in carbon dioxide fixation, as well as the oxidative fragmentation of the pentose substrate in the photorespiration process. Both reactions occur simultaneously and in competition at the same active site. This Vachellia farnesiana (Sweet acacia) protein is Ribulose bisphosphate carboxylase large chain.